Consider the following 456-residue polypeptide: MADGGSERADGRIVKMEVDYSATVDQRLPECEKLAKEGRLQEVIETLLSLEKQTRTASDMVSTSRILVAVVKMCYEAKEWDLLNENIMLLSKRRSQLKQAVAKMVQQCCTYVEEITDLPVKLRLIDTLRMVTEGKIYVEIERARLTKTLATIKEQNGDVKEAASILQELQVETYGSMEKKERVEFILEQMRLCLAVKDYIRTQIISKKINTKFFQEENTENLKLKYYNLMIQLDQHEGSYLSICKHYRAIYDTPCIQAESDKWQQALKSVVLYVILAPFDNEQSDLVHRISSDKKLEEIPKYKDLLKLFTTMELMRWSTLVEDYGVELRKGSSETPATDVFSSTEEGEKRWKDLKSRVVEHNIRIMAKYYTRITMKRMAQLLDLSVDESEAFLSNLVVNKTIFAKVDRLAGVINFQRPKDPNNLLNDWSQKLNSLMSLVNKTTHLIAKEEMIHNLQ.

Ala2 carries the N-acetylalanine modification. Lys92 participates in a covalent cross-link: Glycyl lysine isopeptide (Lys-Gly) (interchain with G-Cter in SUMO1); alternate. A Glycyl lysine isopeptide (Lys-Gly) (interchain with G-Cter in SUMO2); alternate cross-link involves residue Lys92. Residues 242–420 (SICKHYRAIY…GVINFQRPKD (179 aa)) form the PCI domain. Lys368 carries the post-translational modification N6-acetyllysine.

This sequence belongs to the proteasome subunit p55 family. As to quaternary structure, component of the 19S proteasome regulatory particle complex. The 26S proteasome consists of a 20S core particle (CP) and two 19S regulatory subunits (RP). The regulatory particle is made of a lid composed of 9 subunits including PSMD12, a base containing 6 ATPases and few additional components. Interacts with ERCC6.

Functionally, component of the 26S proteasome, a multiprotein complex involved in the ATP-dependent degradation of ubiquitinated proteins. This complex plays a key role in the maintenance of protein homeostasis by removing misfolded or damaged proteins, which could impair cellular functions, and by removing proteins whose functions are no longer required. Therefore, the proteasome participates in numerous cellular processes, including cell cycle progression, apoptosis, or DNA damage repair. This Mus musculus (Mouse) protein is 26S proteasome non-ATPase regulatory subunit 12 (Psmd12).